We begin with the raw amino-acid sequence, 668 residues long: Spindle assembly abnormal protein 6 homolog (668 aa).

The PISA domain occupies 39–91 (VHKKELVVRLSDDTDPFFLYNLTLGEEDFQSLKNQQGLLVEFSAFPQRFIDLL). Residues 182–482 (LGVTQQALAE…NVIAWLNKQL (301 aa)) are a coiled coil. Residues 623–668 (GSVPVKGQRNGSSAGTVPVRPALPKSGSSPILSAYFPGQQSRLPAS) are disordered.

Nine homodimers form a cartwheel structure with an internal diameter of 23 nM and radial spokes connecting to the microtubule triplets.

The protein localises to the cytoplasm. Its subcellular location is the cytoskeleton. It is found in the microtubule organizing center. It localises to the centrosome. Central scaffolding component of the centrioles ensuring their 9-fold symmetry. Required for centrosome biogenesis and duplication: required both for mother-centriole-dependent centriole duplication and deuterosome-dependent centriole amplification in multiciliated cells. This is Spindle assembly abnormal protein 6 homolog (sas6) from Xenopus laevis (African clawed frog).